The chain runs to 530 residues: Carbohydrate sulfotransferase 2 (530 aa).

Residues 1–20 (MSRSSPRALPPGALPRPLPA) form a disordered region. Residues 1 to 54 (MSRSSPRALPPGALPRPLPAAPAAVQRALLPPWPRRAGRRWPASPLGMKVFRRK) lie on the Cytoplasmic side of the membrane. Residues 8–20 (ALPPGALPRPLPA) are compositionally biased toward pro residues. A helical; Signal-anchor for type II membrane protein membrane pass occupies residues 55–75 (ALVLCAGYALLLVLTMLNLLD). The Lumenal segment spans residues 76-530 (YKWHKEPLQQ…SKTLLRKPRL (455 aa)). Residues 97–128 (GAAGAGWGRPGSPPAAPPRAHSRMDPRTPYRP) are disordered. Residue 173-179 (WRSGSSF) participates in 3'-phosphoadenylyl sulfate binding. A glycan (N-linked (GlcNAc...) asparagine) is linked at asparagine 243. 332 to 340 (RDPRAVASS) serves as a coordination point for 3'-phosphoadenylyl sulfate. N-linked (GlcNAc...) asparagine glycosylation is found at asparagine 457 and asparagine 475.

Belongs to the sulfotransferase 1 family. Gal/GlcNAc/GalNAc subfamily. As to quaternary structure, homodimer; disulfide-linked. Homodimerization is not essential for enzyme activity. As to expression, in brain, it is expressed in pyramidal cells in the CA3 subregion of the hippocampus, cerebellar nucleus and Purkinje cells. Expressed in peripheral lymph nodes.

The protein localises to the golgi apparatus. Its subcellular location is the trans-Golgi network membrane. The enzyme catalyses 3-O-{N-acetyl-beta-D-glucosaminyl-(1-&gt;3)-beta-D-galactosyl-(1-&gt;3)-N-acetyl-alpha-D-galactosaminyl}-L-threonyl-[protein] + 3'-phosphoadenylyl sulfate = 3-O-{6-O-sulfo-N-acetyl-beta-D-glucosaminyl-(1-&gt;3)-beta-D-galactosyl-(1-&gt;3)-N-acetyl-alpha-D-galactosaminyl}-L-threonyl-[protein] + adenosine 3',5'-bisphosphate + H(+). The catalysed reaction is 3-O-{N-acetyl-beta-D-glucosaminyl-(1-&gt;3)-beta-D-galactosyl-(1-&gt;3)-N-acetyl-alpha-D-galactosaminyl}-L-seryl-[protein] + 3'-phosphoadenylyl sulfate = 3-O-{6-O-sulfo-N-acetyl-beta-D-glucosaminyl-(1-&gt;3)-beta-D-galactosyl-(1-&gt;3)-N-acetyl-alpha-D-galactosaminyl}-L-seryl-[protein] + adenosine 3',5'-bisphosphate + H(+). It carries out the reaction a 3-O-{beta-D-galactosyl-(1-&gt;3)-[N-acetyl-beta-D-glucosaminyl-(1-&gt;6)]-N-acetyl-alpha-D-galactosaminyl}-L-threonyl-[protein] + 3'-phosphoadenylyl sulfate = 3-O-{beta-D-galactosyl-(1-&gt;3)-[6-O-sulfo-N-acetyl-beta-D-glucosaminyl-(1-&gt;6)]-N-acetyl-alpha-D-galactosaminyl}-L-threonyl-[protein] + adenosine 3',5'-bisphosphate + H(+). It catalyses the reaction 3-O-{beta-D-galactosyl-(1-&gt;3)-[N-acetyl-beta-D-glucosaminyl-(1-&gt;6)]-N-acetyl-alpha-D-galactosaminyl}-L-seryl-[protein] + 3'-phosphoadenylyl sulfate = 3-O-{beta-D-galactosyl-(1-&gt;3)-[6-O-sulfo-N-acetyl-beta-D-glucosaminyl-(1-&gt;6)]-N-acetyl-alpha-D-galactosaminyl}-L-seryl-[protein] + adenosine 3',5'-bisphosphate + H(+). Its pathway is protein modification; carbohydrate sulfation. Its function is as follows. Sulfotransferase that utilizes 3'-phospho-5'-adenylyl sulfate (PAPS) as sulfonate donor to catalyze the transfer of sulfate to position 6 of non-reducing N-acetylglucosamine (GlcNAc) residues within keratan-like structures on N-linked glycans and within mucin-associated glycans that can ultimately serve as SELL ligands. SELL ligands are present in high endothelial cells (HEVs) and play a central role in lymphocyte homing at sites of inflammation. Participates in biosynthesis of the SELL ligand sialyl 6-sulfo Lewis X and in lymphocyte homing to Peyer patches. Has no activity toward O-linked sugars. Its substrate specificity may be influenced by its subcellular location. Sulfates GlcNAc residues at terminal, non-reducing ends of oligosaccharide chains. In Mus musculus (Mouse), this protein is Carbohydrate sulfotransferase 2 (Chst2).